The sequence spans 236 residues: UPF0257 lipoprotein YnfC (236 aa).

The signal sequence occupies residues 1 to 16; it reads MKYKLLPCLLAILLTG. Cys-17 carries N-palmitoyl cysteine lipidation. Cys-17 is lipidated: S-diacylglycerol cysteine.

The protein belongs to the UPF0257 family.

The protein resides in the cell membrane. The protein is UPF0257 lipoprotein YnfC of Escherichia coli O127:H6 (strain E2348/69 / EPEC).